The chain runs to 333 residues: Arginase (333 aa).

Met-1 carries the N-acetylmethionine modification. Residue Ser-16 is modified to Phosphoserine. Thr-77 is modified (phosphothreonine). Mn(2+) contacts are provided by His-123, Asp-146, His-148, and Asp-150. Substrate contacts are provided by residues 148–152 (HADIN), 159–161 (SGN), and Asp-205. Mn(2+)-binding residues include Asp-256 and Asp-258. Thr-270 carries the post-translational modification Phosphothreonine. Thr-270 and Glu-301 together coordinate substrate.

The protein belongs to the arginase family. As to quaternary structure, homotrimer. Mn(2+) serves as cofactor.

The enzyme catalyses L-arginine + H2O = urea + L-ornithine. The protein operates within nitrogen metabolism; urea cycle; L-ornithine and urea from L-arginine: step 1/1. The polypeptide is Arginase (CAR1) (Saccharomyces cerevisiae (strain ATCC 204508 / S288c) (Baker's yeast)).